A 127-amino-acid polypeptide reads, in one-letter code: Glycine cleavage system H protein (127 aa).

Residues 22-104 (KVRIGITHFA…YEKAWMIVVE (83 aa)) enclose the Lipoyl-binding domain. Residue Lys63 is modified to N6-lipoyllysine.

The protein belongs to the GcvH family. As to quaternary structure, the glycine cleavage system is composed of four proteins: P, T, L and H. It depends on (R)-lipoate as a cofactor.

In terms of biological role, the glycine cleavage system catalyzes the degradation of glycine. The H protein shuttles the methylamine group of glycine from the P protein to the T protein. Functionally, is also involved in protein lipoylation via its role as an octanoyl/lipoyl carrier protein intermediate. In Bacillus pumilus (strain SAFR-032), this protein is Glycine cleavage system H protein.